A 441-amino-acid chain; its full sequence is Glutamate-1-semialdehyde 2,1-aminomutase (441 aa).

Lys-276 is subject to N6-(pyridoxal phosphate)lysine.

It belongs to the class-III pyridoxal-phosphate-dependent aminotransferase family. HemL subfamily. In terms of assembly, homodimer. Pyridoxal 5'-phosphate is required as a cofactor.

Its subcellular location is the cytoplasm. The enzyme catalyses (S)-4-amino-5-oxopentanoate = 5-aminolevulinate. Its pathway is porphyrin-containing compound metabolism; protoporphyrin-IX biosynthesis; 5-aminolevulinate from L-glutamyl-tRNA(Glu): step 2/2. The sequence is that of Glutamate-1-semialdehyde 2,1-aminomutase from Rhodococcus jostii (strain RHA1).